The following is a 493-amino-acid chain: Na(+)/H(+) antiporter subunit D (493 aa).

Helical transmembrane passes span 3–23, 31–51, 77–97, 107–127, 129–149, 163–183, 203–223, 227–247, 251–271, 274–294, 299–319, 330–350, 370–390, 407–427, and 449–469; these read NFVILPILIPLLSAILLIFMT, IFSTAASAIGIVISGILVQTV, FASLLVLTTAIIGLLVGLYSF, SFYYSGVQFLLAGVSGAFLTG, LFNMYVFFELLLIASYMLIVL, IVFNIVSSALFVIGVGFLYAV, GLITVIGVLLLLVFGMKGGIF, FWLPGSYYAPPAAISALFGAL, VGLYAITRVFTLIFIHDTAFT, LMIWLAALTVIFGVIGSLAYS, IVIYNIITAVGVILFGVAVHT, LIHDMLIKGALFMLAGTLIAL, GWMFFISAISLAGIPPLSGFV, ISMLILLSSLLVLYSVLRIFI, and LYPAAIFLLLSLLFGLGTEWV.

This sequence belongs to the CPA3 antiporters (TC 2.A.63) subunit D family. Forms a heterooligomeric complex that consists of seven subunits: MrpA, MrpB, MrpC, MrpD, MrpE, MrpF and MrpG.

It localises to the cell membrane. Mrp complex is a Na(+)/H(+) antiporter that is considered to be the major Na(+) excretion system in B.subtilis. Has a major role in Na(+) resistance and a minor role in Na(+)- and K(+)-dependent pH homeostasis as compared to TetB. MrpA may be the actual Na(+)/H(+) antiporter, although the six other Mrp proteins are all required for Na(+)/H(+) antiport activity and Na(+) resistance. MrpA is required for initiation of sporulation when external Na(+) concentration increases. Also transports Li(+) but not K(+), Ca(2+) or Mg(2+). The protein is Na(+)/H(+) antiporter subunit D (mrpD) of Bacillus subtilis (strain 168).